An 886-amino-acid polypeptide reads, in one-letter code: MTLRRSILAFTGGMILVLALICSTFMCHMMMGTLSDLEEAYVHQKVDGTLFYLQEDLSSLKRAAEDWGHWNDTRDFVIGENDQYIQDNLNSWTLSGLDVDFMIYYDRSGNLFYSRAFNHATGEEVPAPGRLLSLAKDDPLIAHSSPEDGLTGIVSDPEGLLLVSSTTILDSHWKGPISGTFIVGRRLDGARAEGLARLSGIDLRMAATAPVGESEGTNSKTSLLIVKEDSDTLIATKTIDDVYGNPTVLLEAQVPREIRSRGLETIRRQVVGIFLASLLFGGLILLFLELSILMPLATITSSVEAIREQEKGQGSRIPTVGPAELATLAESINEMLDHLESYNQKLAMSEKRFRTIVDTAHDCIFIKDPKSRYVLVNPVMERIFQLPASKMLGERDEVFFSAETAARIREKDAGVLSGEPFVGEVSAHTRAGSSMTFHAVKVPLRDDRGQVTGICGIARDITDIKEAGVELLKRDRLLSASAAASYSLLVNYDIDQIIIDVLQLLGEAVEADRAYIFENQTVDGEVLMSQRYEWTKGEVEPQINNPVLQSLPYHPDSSTFYEIISRGRPYVGLVKDLPESERAYLAPQGIVSILIVPIFVEDRLWGFIGFDDCHRERFWSNGEISVLQVAAGSIGGAFIRSRTRADLVRAKGELQERIGEVEAKNAEMERFVYTVSHDLRSPLVTIQGFVGFLREDLSALDGDKIKIDLAMIEEAVLKMDHLLKDTLSLSRVGRVVNPPEEGSFGEIVHEALSQASGELRSRGIKVSLAEGWPRVRVDRLRVQEALTNLLDNSIKYMGDRPHPEIEVGWRPEGEETVFFVRDNGIGMDPDQWEKVFGLFYKIDPDSEGSGVGLAIVRRIIEVHGGRIWIESEEGRGTCVLFTLPTP.

2 consecutive transmembrane segments (helical) span residues 7–27 (ILAF…TFMC) and 270–290 (VVGI…FLEL). Residues 290–344 (LSILMPLATITSSVEAIREQEKGQGSRIPTVGPAELATLAESINEMLDHLESYNQ) form the HAMP domain. The PAS domain maps to 349 to 419 (SEKRFRTIVD…EKDAGVLSGE (71 aa)). One can recognise a PAC domain in the interval 421–473 (FVGEVSAHTRAGSSMTFHAVKVPLRDDRGQVTGICGIARDITDIKEAGVELLK). Residues 674 to 886 (TVSHDLRSPL…TCVLFTLPTP (213 aa)) form the Histidine kinase domain. His-677 carries the phosphohistidine; by autocatalysis modification.

Post-translationally, autophosphorylated.

It localises to the cell membrane. It catalyses the reaction ATP + protein L-histidine = ADP + protein N-phospho-L-histidine.. Functionally, member of the two-component regulatory system FilI/FilRs, which is involved in the regulation of methanogenesis. Autophosphorylates and specifically transfers the phosphoryl group to both FilR1 and FilR2. In terms of biological role, could also catalyze the synthesis of the quorum sensing (QS) signal molecules carboxyl-acyl homoserine lactones (AHLs), which regulate the transition of the cellular morphology from short cells to filaments and of the carbon metabolic flux from biomass formation to methane production. This chain is Methanogenesis regulatory histidine kinase FilI, found in Methanothrix harundinacea (strain 6Ac) (Methanosaeta harundinacea).